The following is a 148-amino-acid chain: UPF0756 membrane protein YeaL (148 aa).

The next 4 helical transmembrane spans lie at 14-34, 51-71, 86-106, and 112-132; these read ALGF…LIIV, LSIG…SGTL, LVAI…VTLM, and LVAG…GVPV.

The protein belongs to the UPF0756 family.

It is found in the cell membrane. In Escherichia coli O157:H7, this protein is UPF0756 membrane protein YeaL.